We begin with the raw amino-acid sequence, 382 residues long: Alkanesulfonate monooxygenase (382 aa).

Belongs to the SsuD family.

The catalysed reaction is an alkanesulfonate + FMNH2 + O2 = an aldehyde + FMN + sulfite + H2O + 2 H(+). Its function is as follows. Catalyzes the desulfonation of aliphatic sulfonates. The polypeptide is Alkanesulfonate monooxygenase (Pseudomonas putida (strain GB-1)).